The sequence spans 554 residues: CTP synthase (554 aa).

Positions 1–265 (MTPLIFVTGG…DEIVIDQFKL (265 aa)) are amidoligase domain. Ser-13 serves as a coordination point for CTP. Ser-13 contacts UTP. Residues 14–19 (SLGKGI) and Asp-71 contribute to the ATP site. Asp-71 and Glu-139 together coordinate Mg(2+). Residues 146 to 148 (DIE), 186 to 191 (KTKPTQ), and Lys-222 each bind CTP. UTP is bound by residues 186 to 191 (KTKPTQ) and Lys-222. The Glutamine amidotransferase type-1 domain occupies 292-545 (TIAVVGKYVD…VKAARARKAG (254 aa)). Gly-353 contacts L-glutamine. The active-site Nucleophile; for glutamine hydrolysis is Cys-380. L-glutamine is bound by residues 381–384 (YGMQ), Glu-404, and Arg-471. Catalysis depends on residues His-518 and Glu-520.

It belongs to the CTP synthase family. As to quaternary structure, homotetramer.

The catalysed reaction is UTP + L-glutamine + ATP + H2O = CTP + L-glutamate + ADP + phosphate + 2 H(+). It carries out the reaction L-glutamine + H2O = L-glutamate + NH4(+). The enzyme catalyses UTP + NH4(+) + ATP = CTP + ADP + phosphate + 2 H(+). The protein operates within pyrimidine metabolism; CTP biosynthesis via de novo pathway; CTP from UDP: step 2/2. Its activity is regulated as follows. Allosterically activated by GTP, when glutamine is the substrate; GTP has no effect on the reaction when ammonia is the substrate. The allosteric effector GTP functions by stabilizing the protein conformation that binds the tetrahedral intermediate(s) formed during glutamine hydrolysis. Inhibited by the product CTP, via allosteric rather than competitive inhibition. In terms of biological role, catalyzes the ATP-dependent amination of UTP to CTP with either L-glutamine or ammonia as the source of nitrogen. Regulates intracellular CTP levels through interactions with the four ribonucleotide triphosphates. In Xylella fastidiosa (strain 9a5c), this protein is CTP synthase.